A 471-amino-acid polypeptide reads, in one-letter code: Steroid C26-monooxygenase (471 aa).

Gly-238 contacts substrate. Residue Cys-412 coordinates heme.

This sequence belongs to the cytochrome P450 family. It depends on heme as a cofactor.

It carries out the reaction cholest-4-en-3-one + 6 reduced [2Fe-2S]-[ferredoxin] + 3 O2 + 5 H(+) = (25S)-3-oxocholest-4-en-26-oate + 6 oxidized [2Fe-2S]-[ferredoxin] + 4 H2O. Functionally, involved in the utilization of cholesterol as the sole carbon and energy source by degrading the side chain. Primarily catalyzes the sequential oxidation of the terminal methyl of cholest-4-en-3-one into (25S)-26-hydroxycholest-4-en-3-one (alcohol), (25S)-26-oxocholest-4-en-3-one (aldehyde), to finally yield the carboxylic acid (25S)-3-oxocholest-4-en-26-oate. Also able to sequentially oxidize cholesterol itself, not only cholest-4-en-3-one. The protein is Steroid C26-monooxygenase (cyp125) of Rhodococcus jostii (strain RHA1).